Here is a 347-residue protein sequence, read N- to C-terminus: MEFCVLFGGASFEHEISIVSAIALKEALKGRIKYFIFLDENHHFYLIEESNMHSKYFAQIKEKKLPPLILTCNGLLKNSFLGAKIIELPLVINLVHGGDGEDGKLASLLEFYRIAFIGPGIEASVLSYNKYLTKLYAKDLGVKALDHVLLNEKNRANALNLIGFNFPFIIKPSNAGSSLGVSVVKEEKELIYALDGAFEYSKEILIEPFIQGVKEYNLAGCKIKKDFCFSYVEEPNKQEFLDFKQKYLDFSRNKAPKANLSNALEEQLKENFKKLYNDLFDGALIRCDFFVIENEVYLNEINPIPGSLANYLFDDFKTTLENLAQSLPKTPKIQIKNSYLLQIQKNK.

An ATP-grasp domain is found at 134–332 (KLYAKDLGVK…LAQSLPKTPK (199 aa)). Position 161–216 (161–216 (LIGFNFPFIIKPSNAGSSLGVSVVKEEKELIYALDGAFEYSKEILIEPFIQGVKEY)) interacts with ATP. 3 residues coordinate Mg(2+): D288, E300, and N302.

This sequence belongs to the D-alanine--D-alanine ligase family. Mg(2+) serves as cofactor. It depends on Mn(2+) as a cofactor.

It is found in the cytoplasm. It carries out the reaction 2 D-alanine + ATP = D-alanyl-D-alanine + ADP + phosphate + H(+). The protein operates within cell wall biogenesis; peptidoglycan biosynthesis. Functionally, cell wall formation. The chain is D-alanine--D-alanine ligase from Helicobacter pylori (strain Shi470).